A 343-amino-acid polypeptide reads, in one-letter code: N-malonyltransferase FDB2 (343 aa).

The active-site Acyl-thioester intermediate is the Cys107. Residue His155 is the Proton acceptor of the active site. The active site involves Asp170.

The protein belongs to the arylamine N-acetyltransferase family.

Its pathway is xenobiotic degradation. Functionally, N-malonyltransferase; part of the Fusarium detoxification of benzoxazolinone cluster involved in the degradation of benzoxazolinones produced by the host plant. Maize, wheat, and rye produce the 2 benzoxazinone phytoanticipins 2,4-dihy-droxy-7-methoxy-1,4-benzoxazin-3-one (DIMBOA) and 2,4-dihydroxy-1,4-benzoxazin-3-one (DIBOA) that, due to their inherent instability once released, spontaneously degrade to the more stable corresponding benzoxazolinones, 6-methoxy-2-benzoxazolinone (MBOA) and 2-benzoxazolinone (BOA), respectively. The first step in the detoxification of benzoxazolinones involves the hydrolysis of the cyclic ester bond of benzoxazolinones by the gamma-lactamase FDB1 to aminophenols. FDB1 is able to convert BOA into 2-aminophenol (2-AP), as well as MBOA into 5-methoxy-2-aminophenol (2-AMP). The N-malonyltransferase FDB2 then metabolizes aminophenols via N-malonylation to non-toxic malonamic acids. FDB2 converts 2-AP into N-(2-hydroxyphenyl) malonamic acid (HPMA) and 2-AMP into N-(2-hydroxy-4-methoxyphenyl) malonamic acid (HMPMA). The cluster also contains 2 transcription factors (FDB3 and FPSE_08121), an aldo-keto reductase (FPSE_08125) that possibly associates with a ketone component of BOA and MBOA degradation, an esterase (FPSE_08126), an acyl-CoA transferase (FPSE_08120), a solute carrier protein (FPSE_08119) and a transmembrane transporter (FPSE_08127) proposed to shuttle metabolites of benzoxazolinone degradation. The chain is N-malonyltransferase FDB2 from Fusarium pseudograminearum (strain CS3096) (Wheat and barley crown-rot fungus).